We begin with the raw amino-acid sequence, 335 residues long: MQRNWRELIKPKRLEVETKGLPNTYGKFECEPLERGFGITLGNALRRVLLSSLQGAAITSVKVDGVLHEFSTIPGVLEDVTDVILNLKEVRFKMHSDGPRLVVIEKDGEGEVAAGDIQGGPHVEVLNPEQHICTLEKDARLRMELTVKQGKGYLPADRNIEENQPIGTIPIDAIFSPIRKVSYTVTQARVAQITDYDKLTMEIWSDGSVKPDDALAYSAKILKDQLTIFINFEEEMETTEEEVRAEPVFNDHLFRSVDELELSVRSANCLKNADIRYIGELVQKTEAEMLKTKNFGRKSLNEIKEILTEMGLSLGMKLENFPSRDDIENRRKEQE.

The alpha N-terminal domain (alpha-NTD) stretch occupies residues 1-233 (MQRNWRELIK…DQLTIFINFE (233 aa)). Residues 249 to 335 (FNDHLFRSVD…DIENRRKEQE (87 aa)) are alpha C-terminal domain (alpha-CTD).

It belongs to the RNA polymerase alpha chain family. In terms of assembly, homodimer. The RNAP catalytic core consists of 2 alpha, 1 beta, 1 beta' and 1 omega subunit. When a sigma factor is associated with the core the holoenzyme is formed, which can initiate transcription.

The catalysed reaction is RNA(n) + a ribonucleoside 5'-triphosphate = RNA(n+1) + diphosphate. DNA-dependent RNA polymerase catalyzes the transcription of DNA into RNA using the four ribonucleoside triphosphates as substrates. The protein is DNA-directed RNA polymerase subunit alpha of Syntrophobacter fumaroxidans (strain DSM 10017 / MPOB).